We begin with the raw amino-acid sequence, 430 residues long: Trigger factor (430 aa).

The 86-residue stretch at 163–248 (GDIAVIDFEG…LNSLKRKNMP (86 aa)) folds into the PPIase FKBP-type domain.

The protein belongs to the FKBP-type PPIase family. Tig subfamily.

It is found in the cytoplasm. The catalysed reaction is [protein]-peptidylproline (omega=180) = [protein]-peptidylproline (omega=0). In terms of biological role, involved in protein export. Acts as a chaperone by maintaining the newly synthesized protein in an open conformation. Functions as a peptidyl-prolyl cis-trans isomerase. The polypeptide is Trigger factor (Brevibacillus brevis (strain 47 / JCM 6285 / NBRC 100599)).